Here is a 479-residue protein sequence, read N- to C-terminus: Dihydrolipoyl dehydrogenase (479 aa).

FAD-binding positions include 41–50 (EKRGALGGTC), lysine 59, alanine 124, and 153–155 (TGS). Cysteine 50 and cysteine 55 form a disulfide bridge. Residues 190–197 (GGGVIGLE), glutamate 213, isoleucine 247, and glycine 284 contribute to the NAD(+) site. FAD is bound by residues aspartate 325 and 332–335 (MLAH). Residue histidine 458 is the Proton acceptor of the active site.

This sequence belongs to the class-I pyridine nucleotide-disulfide oxidoreductase family. As to quaternary structure, homodimer. Requires FAD as cofactor.

It carries out the reaction N(6)-[(R)-dihydrolipoyl]-L-lysyl-[protein] + NAD(+) = N(6)-[(R)-lipoyl]-L-lysyl-[protein] + NADH + H(+). This chain is Dihydrolipoyl dehydrogenase, found in Trypanosoma brucei brucei.